The primary structure comprises 146 residues: BCL7-like protein (146 aa).

A disordered region spans residues 59–146; the sequence is MAPPKIKEVK…RDAEMTSKQP (88 aa). Composition is skewed to polar residues over residues 75–90 and 113–134; these read NQVPSAENSQDSTSVT and DSNQTFEPQNYQGGATGSTDFS. Basic and acidic residues predominate over residues 135–146; the sequence is SMRDAEMTSKQP.

This sequence belongs to the BCL7 family. Ubiquitous.

It is found in the nucleus. Its function is as follows. Required for the terminal differentiation of seam cells, and the differentiation of distal tip cells important for normal somatic gonad and germ cell development. Plays a role in the Wnt signaling pathway, regulating the expression of beta-catenin homologs wrm-1, bar-1 and sys-1, and the localization of wrm-1 and the wnt signaling pathway component pop-1 during asymmetric cell division of seam cells and the Z-cell lineage of the somatic gonad, respectively. May have a pro-apoptotic role, possibly linked to the negative regulation of expression of anti-apoptotic factor ced-9. In Caenorhabditis elegans, this protein is BCL7-like protein.